The chain runs to 347 residues: Ubiquinone biosynthesis protein coq-4, mitochondrial (347 aa).

Residues 1–49 constitute a mitochondrion transit peptide; that stretch reads MEVTALRRSAALVARASSQNAIRPAVCAAISSTSPTPPTQIQTQQTRQF. Zn(2+) contacts are provided by histidine 185, aspartate 186, histidine 189, and glutamate 201. The tract at residues 284–310 is disordered; that stretch reads IRKREREEKRRRKEMERMLSGRGTEDV.

This sequence belongs to the COQ4 family. Component of a multi-subunit COQ enzyme complex, composed of at least coq-3, coq-4, coq-5, coq-6, coq-7 and coq-9. Requires Zn(2+) as cofactor.

The protein localises to the mitochondrion inner membrane. The catalysed reaction is a 4-hydroxy-3-methoxy-5-(all-trans-polyprenyl)benzoate + H(+) = a 2-methoxy-6-(all-trans-polyprenyl)phenol + CO2. Its pathway is cofactor biosynthesis; ubiquinone biosynthesis. Lyase that catalyzes the C1-decarboxylation of 4-hydroxy-3-methoxy-5-(all-trans-polyprenyl)benzoic acid into 2-methoxy-6-(all-trans-polyprenyl)phenol during ubiquinone biosynthesis. The sequence is that of Ubiquinone biosynthesis protein coq-4, mitochondrial from Neurospora crassa (strain ATCC 24698 / 74-OR23-1A / CBS 708.71 / DSM 1257 / FGSC 987).